A 702-amino-acid polypeptide reads, in one-letter code: Polyribonucleotide nucleotidyltransferase (702 aa).

Mg(2+)-binding residues include aspartate 491 and aspartate 497. In terms of domain architecture, KH spans 558–618; sequence PKMKTFMIPV…TAIEKAYQLI (61 aa). Positions 628–696 constitute an S1 motif domain; the sequence is GEKIIGPVVK…GKGKIKLQLI (69 aa).

This sequence belongs to the polyribonucleotide nucleotidyltransferase family. Requires Mg(2+) as cofactor.

It localises to the cytoplasm. It carries out the reaction RNA(n+1) + phosphate = RNA(n) + a ribonucleoside 5'-diphosphate. Its function is as follows. Involved in mRNA degradation. Catalyzes the phosphorolysis of single-stranded polyribonucleotides processively in the 3'- to 5'-direction. This Spiroplasma citri protein is Polyribonucleotide nucleotidyltransferase.